Here is a 95-residue protein sequence, read N- to C-terminus: Large ribosomal subunit protein eL31 (95 aa).

It belongs to the eukaryotic ribosomal protein eL31 family. In terms of assembly, part of the 50S ribosomal subunit.

In Pyrococcus furiosus (strain ATCC 43587 / DSM 3638 / JCM 8422 / Vc1), this protein is Large ribosomal subunit protein eL31.